The primary structure comprises 551 residues: Arginine--tRNA ligase (551 aa).

A 'HIGH' region motif is present at residues 123–133 (ANPTGPLTIGR).

It belongs to the class-I aminoacyl-tRNA synthetase family. In terms of assembly, monomer.

It localises to the cytoplasm. It carries out the reaction tRNA(Arg) + L-arginine + ATP = L-arginyl-tRNA(Arg) + AMP + diphosphate. The sequence is that of Arginine--tRNA ligase from Chlorobium phaeobacteroides (strain DSM 266 / SMG 266 / 2430).